A 143-amino-acid polypeptide reads, in one-letter code: Beta/delta-urticatoxin-Uf2a (143 aa).

The N-terminal stretch at 1–18 is a signal peptide; that stretch reads MGAIVLVALMALVASSSA. Positions 19–80 are excised as a propeptide; sequence FSDIEHNIMK…MMLSGRPQPN (62 aa). Intrachain disulfides connect Cys-83–Cys-100, Cys-90–Cys-105, Cys-99–Cys-113, Cys-115–Cys-129, Cys-122–Cys-134, and Cys-128–Cys-142.

The protein belongs to the urticatoxin-2 family. As to expression, expressed in trichomes, that are stiff epidermal hairs located on the surface of petioles and leaves.

The protein localises to the secreted. Its function is as follows. Plant defense neurotoxin that causes pain and systemic symptoms in mammals via modulation of voltage-gated sodium channels (Nav). Potent modulator of human Nav1.5/SCN5A (EC(50)=55 nM), Nav1.6/SCN8A (EC(50)=0.86 nM), and Nav1.7/SCN9A (EC(50)=208 nM), where it shifts the activation threshold to more negative potentials and delays fast inactivation. Also shifts the voltage-dependence of steady-state fast inactivation of Nav1.6/SCN8A, but not that of Nav1.5/SCN5A or Nav1.7/SCN9A. On Nav1.7/SCN9A, principally acts by binding to extracellular loops of domain IV (Nav site 3). Does not affect current response of the tetrodotoxin (TTX)-resistant Nav1.8/SCN10A sodium channel. In vivo, intraplantar injection into mice causes numerous dose-dependent, immediate, and long-lasting spontaneous pain behaviors, while no swelling is observed in the injected paw. At the highest doses tested, systemic symptoms including hypokinesia and hypersalivation are observed. In Urtica ferox (Tree nettle), this protein is Beta/delta-urticatoxin-Uf2a.